We begin with the raw amino-acid sequence, 194 residues long: UPF0301 protein BQ03640 (194 aa).

This sequence belongs to the UPF0301 (AlgH) family.

This is UPF0301 protein BQ03640 from Bartonella quintana (strain Toulouse) (Rochalimaea quintana).